The primary structure comprises 132 residues: Small ribosomal subunit protein uS8c (132 aa).

Belongs to the universal ribosomal protein uS8 family. In terms of assembly, part of the 30S ribosomal subunit.

The protein localises to the plastid. Its subcellular location is the chloroplast. One of the primary rRNA binding proteins, it binds directly to 16S rRNA central domain where it helps coordinate assembly of the platform of the 30S subunit. This chain is Small ribosomal subunit protein uS8c (rps8), found in Acorus calamus (Sweet flag).